We begin with the raw amino-acid sequence, 609 residues long: MTDDNKGTKFDPKEGCSQWCILEAECSDNSLDGDLEKLFEEGTDTEISDLIDDEDIIQGNSRELLCQQESEESEQQIQLLKRKYLSSQEVLQLSPRLQSITISPQHKSKRRLFERDSGLELSFNEAEDLTQQTLEVQEVSATGSVPAEQGVKGLGIVKDLLKCSNVKAMLLAKFKEAFGVGYMDLTRQYKSSKTCCRDWVVTLYAVQDELIESSKQLLLQHCAYIWLQHMSPMCLYLLCFNVGKSRETVSRLLMNILQVAEVQMLAEPPKLRSMLSALFWYKGSMNPNVYAHGEYPEWILTQTMINHQTAQATQFDLSTMIQFAYDNEYLQEDEIAYHYAKLADTDANARAFLQHNSQARFVKECAIMVRHYKRGEMKEMSISTWVHRKLLVVEGDGHWSDIVKFIRYQDINFIRFLDIFKSFLHNKPKKNCILIHGPPDTGKSMFTMSLIKVLKGKVLSFANCRSNFWLQPLADTKLALIDDVTFVCWDYIDQYLRNGLDGNVVCLDLKHRAPCQIKFPPLLLTSNIDVMKEDKYRYLHSRIQSFAFPNKFPFDNNNMPQFRLTDQSWKSFFERLWHQLDLSDQEEEGDDGQSQRTFQCTAREPNGHL.

A Nuclear localization signal motif is present at residues 81–83 (KRK). Serine 87 and serine 94 each carry phosphoserine; by host. Positions 93-102 (LSPRLQSITI) match the Nuclear export signal motif. The segment at 149-312 (QGVKGLGIVK…TMINHQTAQA (164 aa)) is DNA-binding region. The SF3 helicase domain occupies 411-561 (INFIRFLDIF…FPFDNNNMPQ (151 aa)). 437–444 (GPPDTGKS) lines the ATP pocket. Lysine 518 is covalently cross-linked (Glycyl lysine isopeptide (Lys-Gly) (interchain with G-Cter in SUMO)). Residues 584–609 (DQEEEGDDGQSQRTFQCTAREPNGHL) are disordered.

This sequence belongs to the papillomaviridae E1 protein family. In terms of assembly, can form hexamers. Interacts with E2 protein; this interaction increases E1 DNA binding specificity. Interacts with host DNA polymerase subunit POLA2. Interacts with host single stranded DNA-binding protein RPA1. Interacts with host TOP1; this interaction stimulates the enzymatic activity of TOP1. In terms of processing, phosphorylated. Post-translationally, sumoylated.

The protein resides in the host nucleus. The enzyme catalyses Couples ATP hydrolysis with the unwinding of duplex DNA by translocating in the 3'-5' direction.. The catalysed reaction is ATP + H2O = ADP + phosphate + H(+). Functionally, ATP-dependent DNA 3'-5' helicase required for initiation of viral DNA replication. It forms a complex with the viral E2 protein. The E1-E2 complex binds to the replication origin which contains binding sites for both proteins. During the initial step, a dimer of E1 interacts with a dimer of protein E2 leading to a complex that binds the viral origin of replication with high specificity. Then, a second dimer of E1 displaces the E2 dimer in an ATP-dependent manner to form the E1 tetramer. Following this, two E1 monomers are added to each half of the site, which results in the formation of two E1 trimers on the viral ori. Subsequently, two hexamers will be created. The double hexamer acts as a bi-directional helicase machinery and unwinds the viral DNA and then recruits the host DNA polymerase to start replication. This is Replication protein E1 from Homo sapiens (Human).